The following is a 461-amino-acid chain: UDP-glucose 6-dehydrogenase TuaD (461 aa).

Residues 3 to 20 (KIAV…GTCF), Val-12, Asp-31, Lys-36, Thr-122, and Glu-156 each bind NAD(+). Residues 152–156 (EFLRE), Lys-205, Asn-209, 250–254 (FLKAG), and Gly-258 contribute to the substrate site. Cys-261 (nucleophile) is an active-site residue. Lys-264 contacts NAD(+). Lys-321 contributes to the substrate binding site. An NAD(+)-binding site is contributed by Arg-328.

This sequence belongs to the UDP-glucose/GDP-mannose dehydrogenase family. Phosphorylated by YwqD and dephosphorylated by YwqE in vitro.

It localises to the cytoplasm. It catalyses the reaction UDP-alpha-D-glucose + 2 NAD(+) + H2O = UDP-alpha-D-glucuronate + 2 NADH + 3 H(+). It participates in nucleotide-sugar biosynthesis; UDP-alpha-D-glucuronate biosynthesis; UDP-alpha-D-glucuronate from UDP-alpha-D-glucose: step 1/1. Activated by phosphorylation; inhibited by dephosphorylation. Catalyzes the conversion of UDP-glucose into UDP-glucuronate, one of the precursors of teichuronic acid. The sequence is that of UDP-glucose 6-dehydrogenase TuaD (tuaD) from Bacillus subtilis (strain 168).